Here is a 55-residue protein sequence, read N- to C-terminus: A-type ATP synthase subunit G (55 aa).

In terms of assembly, has multiple subunits, A(3), B(3), C, D, E, F, G, I and K(x); there may be a few other subunits as well.

The protein localises to the cell membrane. Functionally, component of the A-type ATP synthase that produces ATP from ADP in the presence of a proton gradient across the membrane. In Methanosarcina mazei (strain ATCC BAA-159 / DSM 3647 / Goe1 / Go1 / JCM 11833 / OCM 88) (Methanosarcina frisia), this protein is A-type ATP synthase subunit G (atpG).